The chain runs to 270 residues: Insulin-like growth factor-binding protein-like 1 (270 aa).

The N-terminal stretch at 1–17 (MPRLPLLLLLLPSLARG) is a signal peptide. One can recognise an IGFBP N-terminal domain in the interval 26-101 (RHPECSPCQQ…PEGTGLCVCA (76 aa)). 7 disulfide bridges follow: Cys30/Cys55, Cys33/Cys57, Cys38/Cys58, Cys44/Cys61, Cys69/Cys83, Cys77/Cys98, and Cys107/Cys143. The 59-residue stretch at 87–145 (ASGTAPEGTGLCVCAQRGAVCGSDGRSYSSICALRLRARHAPRAHHGHLHKARDGPCEF) folds into the Kazal-like domain. Residues 147–251 (PVVLMPPRDI…GEAQSHGTVT (105 aa)) form the Ig-like C2-type domain. N-linked (GlcNAc...) asparagine glycosylation occurs at Asn158. Cys168 and Cys235 are joined by a disulfide.

Its subcellular location is the secreted. IGF-binding proteins prolong the half-life of IGFs and have been shown to either inhibit or stimulate the growth promoting effects of the IGFs in cell culture. They alter the interaction of IGFs with their cell surface receptors. The polypeptide is Insulin-like growth factor-binding protein-like 1 (Igfbpl1) (Mus musculus (Mouse)).